We begin with the raw amino-acid sequence, 363 residues long: Chorismate synthase (363 aa).

An NADP(+)-binding site is contributed by R48. Residues 125–127 (RSS), 238–239 (NA), G278, 293–297 (KPTAS), and R319 each bind FMN.

It belongs to the chorismate synthase family. In terms of assembly, homotetramer. FMNH2 serves as cofactor.

The catalysed reaction is 5-O-(1-carboxyvinyl)-3-phosphoshikimate = chorismate + phosphate. The protein operates within metabolic intermediate biosynthesis; chorismate biosynthesis; chorismate from D-erythrose 4-phosphate and phosphoenolpyruvate: step 7/7. In terms of biological role, catalyzes the anti-1,4-elimination of the C-3 phosphate and the C-6 proR hydrogen from 5-enolpyruvylshikimate-3-phosphate (EPSP) to yield chorismate, which is the branch point compound that serves as the starting substrate for the three terminal pathways of aromatic amino acid biosynthesis. This reaction introduces a second double bond into the aromatic ring system. The protein is Chorismate synthase of Acinetobacter baumannii (strain ACICU).